A 299-amino-acid chain; its full sequence is Delta-9 desaturase-like 1 protein (299 aa).

Helical transmembrane passes span 31 to 51 (IDIA…LAPF) and 55 to 75 (WEAL…ITFS). The Histidine box-1 motif lies at 77-82 (HRNLTH). A Histidine box-2 motif is present at residues 114–118 (HRFHH). Transmembrane regions (helical) follow at residues 174-194 (IGLH…LPYL) and 198-218 (VGVG…ACHI). Positions 246–250 (HNNHH) match the Histidine box-3 motif. A helical membrane pass occupies residues 262–282 (WYQVDLTWYLICFFQALGLAT).

Belongs to the fatty acid desaturase type 1 family. Requires Fe cation as cofactor.

The protein localises to the endoplasmic reticulum membrane. It participates in lipid metabolism; polyunsaturated fatty acid biosynthesis. The sequence is that of Delta-9 desaturase-like 1 protein from Arabidopsis thaliana (Mouse-ear cress).